The primary structure comprises 344 residues: Trace amine-associated receptor 8b (344 aa).

Over 1–33 (MTSNFSQATLQLCYENVNASCIKTPYSPGLRVL) the chain is Extracellular. N-linked (GlcNAc...) asparagine glycans are attached at residues asparagine 4 and asparagine 18. 2 cysteine pairs are disulfide-bonded: cysteine 21–cysteine 185 and cysteine 104–cysteine 189. The chain crosses the membrane as a helical span at residues 34–54 (LYMVFGFGAVLAVCGNLLVVI). Residues 55–67 (SVLHFKQLHSPAN) are Cytoplasmic-facing. A helical membrane pass occupies residues 68-88 (FLIASLASADFLVGISVMPFS). Over 89 to 102 (MVRSIESCWYFGDT) the chain is Extracellular. A helical membrane pass occupies residues 103 to 127 (FCSLHSCCDAAFCYSSLFHLCFISV). The Cytoplasmic portion of the chain corresponds to 128 to 146 (DRYIAVTEPLVYPTKFTMS). A helical membrane pass occupies residues 147–167 (VSGICISISWILPLVYSSAVF). The Extracellular segment spans residues 168 to 196 (YTGISATGIENLVSALNCVGGCQVAINQD). Residues 197 to 217 (WVLISFLLFFIPTLVMIILYS) form a helical membrane-spanning segment. Residues 218–256 (KIFLVAKQQAVKIETSISGSKGESSLESHKARVAKRERK) lie on the Cytoplasmic side of the membrane. A helical transmembrane segment spans residues 257 to 277 (AAKTLGVTVMAFMVSWLPYTI). The Extracellular portion of the chain corresponds to 278 to 295 (DTLIDAFMGFITPAYVYE). The helical transmembrane segment at 296–319 (ICGWIAYYNSAMNPLIYAFFYPWF) threads the bilayer. Residues 320–344 (RKAIKLILSGKILKGHSSTTSLFSE) are Cytoplasmic-facing.

The protein belongs to the G-protein coupled receptor 1 family.

The protein localises to the cell membrane. Functionally, olfactory receptor activated by trace amines. Trace amine compounds are enriched in animal body fluids and act on trace amine-associated receptors (TAARs) to elicit both intraspecific and interspecific innate behaviors. Ligand-binding causes a conformation change that triggers signaling via G(s)-class of G alpha proteins (GNAL or GNAS). The sequence is that of Trace amine-associated receptor 8b from Rattus norvegicus (Rat).